The primary structure comprises 233 residues: Orotidine 5'-phosphate decarboxylase (233 aa).

Residues Asp-9, Lys-31, 58–67 (DLKLHDIPNT), Thr-120, Arg-182, Gln-191, Gly-211, and Arg-212 each bind substrate. Catalysis depends on Lys-60, which acts as the Proton donor.

This sequence belongs to the OMP decarboxylase family. Type 1 subfamily. Homodimer.

It carries out the reaction orotidine 5'-phosphate + H(+) = UMP + CO2. It functions in the pathway pyrimidine metabolism; UMP biosynthesis via de novo pathway; UMP from orotate: step 2/2. Catalyzes the decarboxylation of orotidine 5'-monophosphate (OMP) to uridine 5'-monophosphate (UMP). The chain is Orotidine 5'-phosphate decarboxylase from Listeria monocytogenes serovar 1/2a (strain ATCC BAA-679 / EGD-e).